The sequence spans 210 residues: Orotate phosphoribosyltransferase (210 aa).

5-phospho-alpha-D-ribose 1-diphosphate is bound by residues Arg94, Lys98, His100, and 120–128; that span reads EDLISTGGS. Orotate is bound at residue Ser124.

It belongs to the purine/pyrimidine phosphoribosyltransferase family. PyrE subfamily. As to quaternary structure, homodimer. Mg(2+) is required as a cofactor.

The catalysed reaction is orotidine 5'-phosphate + diphosphate = orotate + 5-phospho-alpha-D-ribose 1-diphosphate. The protein operates within pyrimidine metabolism; UMP biosynthesis via de novo pathway; UMP from orotate: step 1/2. Its function is as follows. Catalyzes the transfer of a ribosyl phosphate group from 5-phosphoribose 1-diphosphate to orotate, leading to the formation of orotidine monophosphate (OMP). The polypeptide is Orotate phosphoribosyltransferase (Halalkalibacterium halodurans (strain ATCC BAA-125 / DSM 18197 / FERM 7344 / JCM 9153 / C-125) (Bacillus halodurans)).